A 245-amino-acid chain; its full sequence is U11/U12 small nuclear ribonucleoprotein 35 kDa protein (245 aa).

The region spanning 51-129 (LTLFVARLNL…HEIFVDYELE (79 aa)) is the RRM domain. Residues 146–162 (GKKESGQLRFGGRDRPF) are compositionally biased toward basic and acidic residues. The tract at residues 146 to 165 (GKKESGQLRFGGRDRPFRKP) is disordered. A Glycyl lysine isopeptide (Lys-Gly) (interchain with G-Cter in SUMO2) cross-link involves residue Lys172. The tract at residues 173–222 (NDQFREGKRERRERSRSRERHWDSRMRDHHDRGREKRWQEREPARAWPEG) is disordered. 2 stretches are compositionally biased toward basic and acidic residues: residues 174–185 (DQFREGKRERRE) and 192–216 (RHWD…REPA).

In terms of assembly, component of the U11/U12 snRNPs that are part of the U12-type spliceosome.

The protein resides in the nucleus. The protein is U11/U12 small nuclear ribonucleoprotein 35 kDa protein (SNRNP35) of Bos taurus (Bovine).